A 149-amino-acid chain; its full sequence is 3-dehydroquinate dehydratase (149 aa).

Catalysis depends on tyrosine 26, which acts as the Proton acceptor. Substrate contacts are provided by asparagine 78, histidine 84, and aspartate 91. The active-site Proton donor is the histidine 104. Residues 105-106 (IS) and arginine 115 contribute to the substrate site.

Belongs to the type-II 3-dehydroquinase family. Homododecamer.

The enzyme catalyses 3-dehydroquinate = 3-dehydroshikimate + H2O. Its pathway is metabolic intermediate biosynthesis; chorismate biosynthesis; chorismate from D-erythrose 4-phosphate and phosphoenolpyruvate: step 3/7. Its function is as follows. Catalyzes a trans-dehydration via an enolate intermediate. The sequence is that of 3-dehydroquinate dehydratase (aroQ) from Buchnera aphidicola subsp. Schizaphis graminum (strain Sg).